A 41-amino-acid chain; its full sequence is Urotensin-1 (41 aa).

Valine 41 bears the Valine amide mark.

This sequence belongs to the sauvagine/corticotropin-releasing factor/urotensin I family.

It is found in the secreted. Its function is as follows. Urotensin is found in the teleost caudal neurosecretory system. It has a suggested role in osmoregulation and as a corticotropin-releasing factor. This Catostomus commersonii (White sucker) protein is Urotensin-1.